Reading from the N-terminus, the 286-residue chain is Putative transcription factor kapC (286 aa).

The span at 1 to 10 shows a compositional bias: pro residues; that stretch reads MQPALAPAPH. The interval 1 to 120 is disordered; the sequence is MQPALAPAPH…QNRAAQRAFR (120 aa). Residues 26-40 are compositionally biased toward low complexity; the sequence is HDQLLAAHQHLSHPQ. Over residues 41–54 the composition is skewed to pro residues; the sequence is QPRPQAPATQPPHM. Residues 55–67 are compositionally biased toward polar residues; it reads QPNTASPRDQNNI. Positions 81 to 92 are enriched in pro residues; that stretch reads PQTPPQPEPAPQ. The region spanning 102–165 is the bZIP domain; the sequence is PLSTSKRAAQ…EYIINLQTRL (64 aa). Residues 103 to 126 are basic motif; that stretch reads LSTSKRAAQNRAAQRAFRQRKESY. The segment covering 108–118 has biased composition (low complexity); it reads RAAQNRAAQRA. Residues 130 to 161 form a leucine-zipper region; the sequence is LEEQVKHQEAITEEYKALHAENYQLREYIINL. The disordered stretch occupies residues 197–286; sequence RGNAASAGPA…QEPDGLPVVS (90 aa). Low complexity predominate over residues 198-222; the sequence is GNAASAGPAPAGPGPQQSQPNQNQG.

The protein belongs to the bZIP family.

It localises to the nucleus. Putative transcription factor. The sequence is that of Putative transcription factor kapC (kapC) from Aspergillus terreus (strain NIH 2624 / FGSC A1156).